The chain runs to 641 residues: 1-deoxy-D-xylulose-5-phosphate synthase (641 aa).

Residues His71 and 112 to 114 contribute to the thiamine diphosphate site; that span reads SHA. Residue Asp144 coordinates Mg(2+). Residues 145 to 146, Asn173, Tyr284, and Glu365 each bind thiamine diphosphate; that span reads GA. Residue Asn173 coordinates Mg(2+).

Belongs to the transketolase family. DXPS subfamily. As to quaternary structure, homodimer. Mg(2+) serves as cofactor. The cofactor is thiamine diphosphate.

It carries out the reaction D-glyceraldehyde 3-phosphate + pyruvate + H(+) = 1-deoxy-D-xylulose 5-phosphate + CO2. Its pathway is metabolic intermediate biosynthesis; 1-deoxy-D-xylulose 5-phosphate biosynthesis; 1-deoxy-D-xylulose 5-phosphate from D-glyceraldehyde 3-phosphate and pyruvate: step 1/1. In terms of biological role, catalyzes the acyloin condensation reaction between C atoms 2 and 3 of pyruvate and glyceraldehyde 3-phosphate to yield 1-deoxy-D-xylulose-5-phosphate (DXP). The chain is 1-deoxy-D-xylulose-5-phosphate synthase from Mycolicibacterium paratuberculosis (strain ATCC BAA-968 / K-10) (Mycobacterium paratuberculosis).